Reading from the N-terminus, the 328-residue chain is Small neutral protease regulatory protein (328 aa).

Residues 1–60 form the HTH lysR-type domain; sequence MELEVRHLRALCAIADAGSLHRAARRLGVAQPTLSTQLTRIEQALGGPLFTRERTGCRPT. Positions 20-39 form a DNA-binding region, H-T-H motif; it reads LHRAARRLGVAQPTLSTQLT.

The protein belongs to the LysR transcriptional regulatory family.

Its function is as follows. Transcriptional trans-activator of the gene (mprA) for the small neutral protease. The chain is Small neutral protease regulatory protein (mprR) from Streptomyces coelicolor (strain ATCC BAA-471 / A3(2) / M145).